A 382-amino-acid chain; its full sequence is uncharacterized protein (382 aa).

The next 10 membrane-spanning stretches (helical) occupy residues 8-28, 41-61, 73-93, 94-114, 133-153, 157-177, 208-228, 274-294, 325-345, and 349-369; these read VLLL…LNTL, WQVG…TLIA, SYHC…LTVD, FWSW…IWVI, AAYM…LGIV, LLSV…PLLF, GCII…LYLS, VVIL…ALFI, ALLM…SLLM, and SDNL…MMLL.

Belongs to the major facilitator superfamily. YcaD (TC 2.A.1.26) family.

It localises to the cell inner membrane. This is an uncharacterized protein from Yersinia pseudotuberculosis serotype O:3 (strain YPIII).